Here is an 88-residue protein sequence, read N- to C-terminus: Snakin-1 (88 aa).

The N-terminal stretch at 1–25 (MKLFLLTLLLVTLVITPSLIQTTMA) is a signal peptide.

This sequence belongs to the GASA family. In terms of processing, six disulfide bonds may be present. In terms of tissue distribution, expressed in tubers, stems, axillary and young floral buds, sepals, petals, stamens and carpels, but not in roots, stolons, shoot apex meristem or young leaves.

The protein localises to the secreted. It is found in the cell wall. Its function is as follows. Has an antimicrobial activity. Causes a rapid aggregation of both Gram-positive and Gram-negative bacteria, but the antimicrobial activity is not correlated with the capacity to aggregate bacteria. The sequence is that of Snakin-1 (SN1) from Solanum tuberosum (Potato).